Here is a 255-residue protein sequence, read N- to C-terminus: Small ribosomal subunit protein uS2 (255 aa).

Residues 232 to 255 form a disordered region; it reads ASGRDIGASEEAPIEPALEDEAGA.

This sequence belongs to the universal ribosomal protein uS2 family.

The chain is Small ribosomal subunit protein uS2 from Agrobacterium fabrum (strain C58 / ATCC 33970) (Agrobacterium tumefaciens (strain C58)).